We begin with the raw amino-acid sequence, 328 residues long: Twinfilin (328 aa).

The ADF-H 1 domain maps to 1 to 137 (MSASVELKPT…DYQQIMKSLS (137 aa)). The residue at position 143 (Ser143) is a Phosphoserine. Positions 173 to 304 (GVAMSIDDKA…TEKEILHAAG (132 aa)) constitute an ADF-H 2 domain. Positions 302 to 328 (AAGISSPQAETSTTKTGFSRPRPPRRR) are disordered. Polar residues predominate over residues 306–318 (SSPQAETSTTKTG).

Belongs to the actin-binding proteins ADF family. Twinfilin subfamily. In terms of assembly, interacts with G-actin; ADP-actin form.

It is found in the cytoplasm. Its subcellular location is the cytoskeleton. Actin-binding protein involved in motile and morphological processes. Inhibits actin polymerization, likely by sequestering G-actin. Prevents actin filament assembly by forming a 1:1 complex with actin monomers, and inhibits the nucleotide exchange reaction of actin monomers. The chain is Twinfilin (twf1) from Schizosaccharomyces pombe (strain 972 / ATCC 24843) (Fission yeast).